Here is a 446-residue protein sequence, read N- to C-terminus: Xylose isomerase 2 (446 aa).

Active-site residues include H109 and D112. 7 residues coordinate Mg(2+): E240, E276, H279, D304, D315, D317, and D347.

This sequence belongs to the xylose isomerase family. In terms of assembly, homotetramer. The cofactor is Mg(2+).

The protein resides in the cytoplasm. The enzyme catalyses alpha-D-xylose = alpha-D-xylulofuranose. The chain is Xylose isomerase 2 from Xanthomonas campestris pv. campestris (strain 8004).